We begin with the raw amino-acid sequence, 449 residues long: Hyaluronidase (449 aa).

The first 23 residues, 1 to 23 (MYHLWIKCLAAWIFLKRFNGVHV), serve as a signal peptide directing secretion. Intrachain disulfides connect cysteine 47–cysteine 340 and cysteine 211–cysteine 227. Residues asparagine 67, asparagine 103, and asparagine 111 are each glycosylated (N-linked (GlcNAc...) asparagine). The active-site Proton donor is the glutamate 135. A glycan (N-linked (GlcNAc...) asparagine) is linked at asparagine 153. Residue asparagine 357 is glycosylated (N-linked (GlcNAc...) asparagine). 3 disulfides stabilise this stretch: cysteine 365-cysteine 376, cysteine 370-cysteine 427, and cysteine 429-cysteine 438. An N-linked (GlcNAc...) asparagine glycan is attached at asparagine 401. An EGF-like domain is found at 427 to 438 (CQCYQGWKGLYC).

This sequence belongs to the glycosyl hydrolase 56 family. Monomer. Expressed by the venom gland.

Its subcellular location is the secreted. It catalyses the reaction Random hydrolysis of (1-&gt;4)-linkages between N-acetyl-beta-D-glucosamine and D-glucuronate residues in hyaluronate.. In terms of biological role, snake venom endo-hyaluronidase that degrades hyaluronan to smaller oligosaccharide fragments. In venom, it is not toxic by itself, but increases the diffusion of other venom proteins by degrading the extracellular matrix. In addition, it displays antiedematogenic activity. This is Hyaluronidase from Crotalus adamanteus (Eastern diamondback rattlesnake).